The sequence spans 533 residues: uncharacterized protein (533 aa).

Composition is skewed to polar residues over residues 30–43 (SQQG…VKNH), 79–91 (NAGT…THLS), 231–247 (NVKS…SSSA), and 254–263 (GRQSNSPNSN). Disordered regions lie at residues 30 to 92 (SQQG…HLSA) and 221 to 274 (SLSP…PGAS). Phosphoserine is present on serine 336. Residues 475–510 (HPSLSNSAASPPVSSPGLRRSHIPVHEGLKHTRDGV) are disordered. A compositionally biased stretch (low complexity) spans 476–490 (PSLSNSAASPPVSSP). The segment covering 498–510 (PVHEGLKHTRDGV) has biased composition (basic and acidic residues).

Its subcellular location is the nucleus. This is an uncharacterized protein from Schizosaccharomyces pombe (strain 972 / ATCC 24843) (Fission yeast).